A 523-amino-acid chain; its full sequence is Ribonuclease Y (523 aa).

A helical membrane pass occupies residues 7–24 (LSSLASALLAGGGTYLVY). The region spanning 213 to 279 (LINVVNLPND…TRTIEALVED (67 aa)) is the KH domain. The HD domain occupies 339 to 432 (ALGHSLEVAN…VCAADALSAA (94 aa)).

This sequence belongs to the RNase Y family.

It localises to the cell membrane. Functionally, endoribonuclease that initiates mRNA decay. The protein is Ribonuclease Y of Wolinella succinogenes (strain ATCC 29543 / DSM 1740 / CCUG 13145 / JCM 31913 / LMG 7466 / NCTC 11488 / FDC 602W) (Vibrio succinogenes).